Here is a 538-residue protein sequence, read N- to C-terminus: Phosphoenolpyruvate carboxykinase (ATP) (538 aa).

The substrate site is built by R61, Y195, and K201. Residues K201, H220, and 236 to 244 (GLSGTGKTT) contribute to the ATP site. Mn(2+) is bound by residues K201 and H220. D257 is a Mn(2+) binding site. Residues E285, R323, and T449 each coordinate ATP. R323 is a substrate binding site.

It belongs to the phosphoenolpyruvate carboxykinase (ATP) family. Mn(2+) is required as a cofactor.

Its subcellular location is the cytoplasm. The enzyme catalyses oxaloacetate + ATP = phosphoenolpyruvate + ADP + CO2. It participates in carbohydrate biosynthesis; gluconeogenesis. In terms of biological role, involved in the gluconeogenesis. Catalyzes the conversion of oxaloacetate (OAA) to phosphoenolpyruvate (PEP) through direct phosphoryl transfer between the nucleoside triphosphate and OAA. This chain is Phosphoenolpyruvate carboxykinase (ATP), found in Afipia carboxidovorans (strain ATCC 49405 / DSM 1227 / KCTC 32145 / OM5) (Oligotropha carboxidovorans).